Here is a 546-residue protein sequence, read N- to C-terminus: Tegument protein UL21 homolog (546 aa).

The protein belongs to the alphaherpesvirinae HHV-1 UL21 protein family.

Its subcellular location is the virion tegument. It localises to the host cytoplasm. It is found in the host nucleus. Functionally, may facilitate the viral transport through neural circuits. The chain is Tegument protein UL21 homolog (MDV033) from Gallus gallus (Chicken).